Reading from the N-terminus, the 215-residue chain is FBD domain-containing protein At3g58975 (215 aa).

The FBD domain occupies arginine 122–leucine 199.

This is FBD domain-containing protein At3g58975 from Arabidopsis thaliana (Mouse-ear cress).